A 288-amino-acid chain; its full sequence is Polyamine aminopropyltransferase (288 aa).

The 230-residue stretch at 9-238 folds into the PABS domain; sequence ETLHDQFGQY…GIMTFAWATD (230 aa). Position 33 (Gln33) interacts with S-methyl-5'-thioadenosine. Spermidine is bound by residues His64 and Asp88. S-methyl-5'-thioadenosine-binding positions include Glu108 and 140 to 141; that span reads DG. The Proton acceptor role is filled by Asp158. 158–161 contributes to the spermidine binding site; sequence DCTD. Pro165 lines the S-methyl-5'-thioadenosine pocket.

This sequence belongs to the spermidine/spermine synthase family. In terms of assembly, homodimer or homotetramer.

The protein resides in the cytoplasm. It catalyses the reaction S-adenosyl 3-(methylsulfanyl)propylamine + putrescine = S-methyl-5'-thioadenosine + spermidine + H(+). Its pathway is amine and polyamine biosynthesis; spermidine biosynthesis; spermidine from putrescine: step 1/1. Catalyzes the irreversible transfer of a propylamine group from the amino donor S-adenosylmethioninamine (decarboxy-AdoMet) to putrescine (1,4-diaminobutane) to yield spermidine. This chain is Polyamine aminopropyltransferase, found in Escherichia coli O81 (strain ED1a).